The sequence spans 181 residues: Acireductone dioxygenase (181 aa).

Residues His-97, His-99, Glu-103, and His-141 each contribute to the Fe(2+) site. Residues His-97, His-99, Glu-103, and His-141 each contribute to the Ni(2+) site.

It belongs to the acireductone dioxygenase (ARD) family. In terms of assembly, monomer. Requires Fe(2+) as cofactor. It depends on Ni(2+) as a cofactor.

The catalysed reaction is 1,2-dihydroxy-5-(methylsulfanyl)pent-1-en-3-one + O2 = 3-(methylsulfanyl)propanoate + CO + formate + 2 H(+). It carries out the reaction 1,2-dihydroxy-5-(methylsulfanyl)pent-1-en-3-one + O2 = 4-methylsulfanyl-2-oxobutanoate + formate + 2 H(+). It participates in amino-acid biosynthesis; L-methionine biosynthesis via salvage pathway; L-methionine from S-methyl-5-thio-alpha-D-ribose 1-phosphate: step 5/6. Catalyzes 2 different reactions between oxygen and the acireductone 1,2-dihydroxy-3-keto-5-methylthiopentene (DHK-MTPene) depending upon the metal bound in the active site. Fe-containing acireductone dioxygenase (Fe-ARD) produces formate and 2-keto-4-methylthiobutyrate (KMTB), the alpha-ketoacid precursor of methionine in the methionine recycle pathway. Ni-containing acireductone dioxygenase (Ni-ARD) produces methylthiopropionate, carbon monoxide and formate, and does not lie on the methionine recycle pathway. This is Acireductone dioxygenase from Pseudomonas paraeruginosa (strain DSM 24068 / PA7) (Pseudomonas aeruginosa (strain PA7)).